The primary structure comprises 209 residues: Large ribosomal subunit protein uL3 (209 aa).

A disordered region spans residues 128–163; it reads AHRGPMTHGSKFHRAVGSMGASSDPSRTFKNKRMPG.

It belongs to the universal ribosomal protein uL3 family. Part of the 50S ribosomal subunit. Forms a cluster with proteins L14 and L19.

Its function is as follows. One of the primary rRNA binding proteins, it binds directly near the 3'-end of the 23S rRNA, where it nucleates assembly of the 50S subunit. This is Large ribosomal subunit protein uL3 from Clostridium botulinum (strain 657 / Type Ba4).